The sequence spans 133 residues: Small ribosomal subunit protein uS8 (133 aa).

The protein belongs to the universal ribosomal protein uS8 family. As to quaternary structure, part of the 30S ribosomal subunit. Contacts proteins S5 and S12.

Functionally, one of the primary rRNA binding proteins, it binds directly to 16S rRNA central domain where it helps coordinate assembly of the platform of the 30S subunit. The protein is Small ribosomal subunit protein uS8 of Micrococcus luteus (Micrococcus lysodeikticus).